We begin with the raw amino-acid sequence, 863 residues long: MATTGTPTADRGDAAATDDPAARFQVQKHSWDGLRSIIHGSRKYSGLIVNKAPHDFQFVQKTDESGPHSHRLYYLGMPYGSRENSLLYSEIPKKVRKEALLLLSWKQMLDHFQATPHHGVYSREEELLRERKRLGVFGITSYDFHSESGLFLFQASNSLFHCRDGGKNGFMVSPMKPLEIKTQCSGPRMDPKICPADPAFFSFINNSDLWVANIETGEERRLTFCHQGLSNVLDDPKSAGVATFVIQEEFDRFTGYWWCPTASWEGSEGLKTLRILYEEVDESEVEVIHVPSPALEERKTDSYRYPRTGSKNPKIALKLAEFQTDSQGKIVSTQEKELVQPFSSLFPKVEYIARAGWTRDGKYAWAMFLDRPQQWLQLVLLPPALFIPSTENEEQRLASARAVPRNVQPYVVYEEVTNVWINVHDIFYPFPQSEGEDELCFLRANECKTGFCHLYKVTAVLKSQGYDWSEPFSPGEDEFKCPIKEEIALTSGEWEVLARHGSKIWVNEETKLVYFQGTKDTPLEHHLYVVSYEAAGEIVRLTTPGFSHSCSMSQNFDMFVSHYSSVSTPPCVHVYKLSGPDDDPLHKQPRFWASMMEAASCPPDYVPPEIFHFHTRSDVRLYGMIYKPHALQPGKKHPTVLFVYGGPQVQLVNNSFKGIKYLRLNTLASLGYAVVVIDGRGSCQRGLRFEGALKNQMGQVEIEDQVEGLQFVAEKYGFIDLSRVAIHGWSYGGFLSLMGLIHKPQVFKVAIAGAPVTVWMAYDTGYTERYMDVPENNQHGYEAGSVALHVEKLPNEPNRLLILHGFLDENVHFFHTNFLVSQLIRAGKPYQLQIYPNERHSIRCPESGEHYEVTLLHFLQEYL.

Positions 1–20 (MATTGTPTADRGDAAATDDP) are disordered. The residue at position 2 (A2) is an N-acetylalanine. Active-site charge relay system residues include S730, D808, and H840. S730 is a Val-boroPro binding site.

It belongs to the peptidase S9B family. DPPIV subfamily. Homodimer. Forms a ternary complex with NLRP1, composed of a DPP9 homodimer, one full-length NLRP1 protein, and one cleaved C-terminus of NLRP1 (NACHT, LRR and PYD domains-containing protein 1, C-terminus). Forms a ternary complex with CARD8, composed of a DPP9 homodimer, one full-length NLRP1 protein, and one cleaved C-terminus of CARD8 (Caspase recruitment domain-containing protein 8, C-terminus). In the ternary complex, only one subunit of the DPP9 homodimer is bound to NLRP1 or CARD8. Ubiquitously expressed, with highest levels in liver, heart and muscle, and lowest levels in brain.

The protein resides in the cytoplasm. It localises to the cytosol. The protein localises to the nucleus. The catalysed reaction is Release of an N-terminal dipeptide, Xaa-Yaa-|-Zaa-, from a polypeptide, preferentially when Yaa is Pro, provided Zaa is neither Pro nor hydroxyproline.. With respect to regulation, inhibited by the serine proteinase inhibitor 4-(2-aminoethyl)benzenesulphonyl fluoride (AEBSF), and by di-isopropylfluorophosphate. Inhibited by Val-boroPro (Talabostat, PT-100), a non-selective inhibitor, which triggers pyroptosis in monocytes and macrophages. Val-boroPro inhibits activity by binding to the active site, mimicking a substrate-bound state, thereby displacing the C-terminal fragment of NLRP1, leading to activation of the NLRP1 inflammasome. In contrast, Val-boroPro does not directly displaces CARD8: it acts by promoting degradation of the N-terminal part of CARD8, leading to indirect disruption of the ternary complex. Chemical inhibition of DPP9 by Val-boroPro in HIV-1-infected cells activates the CARD8 inflammasome, triggering cell death, offering a promising strategy for the elimination of HIV-1 reservoirs in people living with HIV-1. Functionally, dipeptidyl peptidase that cleaves off N-terminal dipeptides from proteins having a Pro or Ala residue at position 2. Acts as a key inhibitor of caspase-1-dependent monocyte and macrophage pyroptosis in resting cells by preventing activation of NLRP1 and CARD8. Sequesters the cleaved C-terminal part of NLRP1 and CARD8, which respectively constitute the active part of the NLRP1 and CARD8 inflammasomes, in a ternary complex, thereby preventing their oligomerization and activation. The dipeptidyl peptidase activity is required to suppress NLRP1 and CARD8; however, neither NLRP1 nor CARD8 are bona fide substrates of DPP9, suggesting the existence of substrate(s) required for NLRP1 and CARD8 inhibition. The sequence is that of Dipeptidyl peptidase 9 from Homo sapiens (Human).